A 67-amino-acid polypeptide reads, in one-letter code: Large ribosomal subunit protein bL32 (67 aa).

Positions 1–44 are disordered; the sequence is MAVQQNRKSPSKRDMRRSHDALGFSTLSTDSKSGERHRRHHVTK. Basic and acidic residues predominate over residues 11–20; it reads SKRDMRRSHD.

The protein belongs to the bacterial ribosomal protein bL32 family.

The sequence is that of Large ribosomal subunit protein bL32 from Dichelobacter nodosus (strain VCS1703A).